We begin with the raw amino-acid sequence, 448 residues long: tRNA modification GTPase MnmE (448 aa).

Arg24, Glu81, and Lys120 together coordinate (6S)-5-formyl-5,6,7,8-tetrahydrofolate. The region spanning 216-373 (GLNVVLVGAP…LKRTLLREAG (158 aa)) is the TrmE-type G domain. A K(+)-binding site is contributed by Asn226. GTP-binding positions include 226–231 (NVGKSS), 245–251 (TDIAGTT), and 270–273 (DTAG). Mg(2+) is bound at residue Ser230. Thr245, Ile247, and Thr250 together coordinate K(+). Residue Thr251 participates in Mg(2+) binding. Lys448 is a (6S)-5-formyl-5,6,7,8-tetrahydrofolate binding site.

It belongs to the TRAFAC class TrmE-Era-EngA-EngB-Septin-like GTPase superfamily. TrmE GTPase family. As to quaternary structure, homodimer. Heterotetramer of two MnmE and two MnmG subunits. K(+) is required as a cofactor.

Its subcellular location is the cytoplasm. In terms of biological role, exhibits a very high intrinsic GTPase hydrolysis rate. Involved in the addition of a carboxymethylaminomethyl (cmnm) group at the wobble position (U34) of certain tRNAs, forming tRNA-cmnm(5)s(2)U34. This Neisseria meningitidis serogroup A / serotype 4A (strain DSM 15465 / Z2491) protein is tRNA modification GTPase MnmE.